The primary structure comprises 717 residues: Pentatricopeptide repeat-containing protein At1g53600, mitochondrial (717 aa).

A mitochondrion-targeting transit peptide spans M1–S47. PPR repeat units follow at residues A49–R79, S80–R110, V111–K142, N143–K173, D176–K206, E207–T241, W242–K272, N274–F308, D309–K339, D340–S374, W375–K401, D402–P436, N437–N471, D472–P502, N503–P537, N538–S568, and G574–K604. The interval V609–K684 is type E motif. Residues G685 to E715 are type E(+) motif.

This sequence belongs to the PPR family. PCMP-E subfamily.

Its subcellular location is the mitochondrion. This Arabidopsis thaliana (Mouse-ear cress) protein is Pentatricopeptide repeat-containing protein At1g53600, mitochondrial (PCMP-E63).